The chain runs to 340 residues: Biotin synthase (340 aa).

A disordered region spans residues methionine 1–aspartate 21. A Radical SAM core domain is found at asparagine 53–arginine 272. Residues cysteine 68, cysteine 72, and cysteine 75 each contribute to the [4Fe-4S] cluster site. Residues cysteine 112, cysteine 143, cysteine 203, and arginine 276 each coordinate [2Fe-2S] cluster.

This sequence belongs to the radical SAM superfamily. Biotin synthase family. In terms of assembly, homodimer. [4Fe-4S] cluster is required as a cofactor. The cofactor is [2Fe-2S] cluster.

The enzyme catalyses (4R,5S)-dethiobiotin + (sulfur carrier)-SH + 2 reduced [2Fe-2S]-[ferredoxin] + 2 S-adenosyl-L-methionine = (sulfur carrier)-H + biotin + 2 5'-deoxyadenosine + 2 L-methionine + 2 oxidized [2Fe-2S]-[ferredoxin]. It participates in cofactor biosynthesis; biotin biosynthesis; biotin from 7,8-diaminononanoate: step 2/2. Functionally, catalyzes the conversion of dethiobiotin (DTB) to biotin by the insertion of a sulfur atom into dethiobiotin via a radical-based mechanism. The chain is Biotin synthase from Nitrobacter hamburgensis (strain DSM 10229 / NCIMB 13809 / X14).